A 217-amino-acid polypeptide reads, in one-letter code: Elongation factor Ts (217 aa).

The tract at residues 81–84 (TDFV) is involved in Mg(2+) ion dislocation from EF-Tu.

Belongs to the EF-Ts family.

The protein resides in the cytoplasm. Associates with the EF-Tu.GDP complex and induces the exchange of GDP to GTP. It remains bound to the aminoacyl-tRNA.EF-Tu.GTP complex up to the GTP hydrolysis stage on the ribosome. This Myxococcus xanthus (strain DK1622) protein is Elongation factor Ts.